A 375-amino-acid polypeptide reads, in one-letter code: Chaperone protein DnaJ (375 aa).

The region spanning 5–70 (DYYEVLEISR…QKRQAYDRFG (66 aa)) is the J domain. The CR-type zinc finger occupies 133–211 (GKEVTIQIPS…CHGHGRVRRN (79 aa)). Zn(2+) is bound by residues cysteine 146, cysteine 149, cysteine 163, cysteine 166, cysteine 185, cysteine 188, cysteine 199, and cysteine 202. CXXCXGXG motif repeat units lie at residues 146-153 (CEVCRGSG), 163-170 (CATCGGRG), 185-192 (CPQCNGSG), and 199-206 (CTNCHGHG).

This sequence belongs to the DnaJ family. As to quaternary structure, homodimer. Requires Zn(2+) as cofactor.

It localises to the cytoplasm. In terms of biological role, participates actively in the response to hyperosmotic and heat shock by preventing the aggregation of stress-denatured proteins and by disaggregating proteins, also in an autonomous, DnaK-independent fashion. Unfolded proteins bind initially to DnaJ; upon interaction with the DnaJ-bound protein, DnaK hydrolyzes its bound ATP, resulting in the formation of a stable complex. GrpE releases ADP from DnaK; ATP binding to DnaK triggers the release of the substrate protein, thus completing the reaction cycle. Several rounds of ATP-dependent interactions between DnaJ, DnaK and GrpE are required for fully efficient folding. Also involved, together with DnaK and GrpE, in the DNA replication of plasmids through activation of initiation proteins. In Acidithiobacillus ferrooxidans (strain ATCC 23270 / DSM 14882 / CIP 104768 / NCIMB 8455) (Ferrobacillus ferrooxidans (strain ATCC 23270)), this protein is Chaperone protein DnaJ.